The sequence spans 312 residues: Beta-ketoacyl-[acyl-carrier-protein] synthase III 1 (312 aa).

Catalysis depends on residues Cys-113 and His-237. The interval 238-242 is ACP-binding; it reads QANIR. The active site involves Asn-267.

The protein belongs to the thiolase-like superfamily. FabH family. In terms of assembly, homodimer.

It localises to the cytoplasm. The enzyme catalyses malonyl-[ACP] + acetyl-CoA + H(+) = 3-oxobutanoyl-[ACP] + CO2 + CoA. It functions in the pathway lipid metabolism; fatty acid biosynthesis. Its function is as follows. Catalyzes the condensation reaction of fatty acid synthesis by the addition to an acyl acceptor of two carbons from malonyl-ACP. Catalyzes the first condensation reaction which initiates fatty acid synthesis and may therefore play a role in governing the total rate of fatty acid production. Possesses both acetoacetyl-ACP synthase and acetyl transacylase activities. Its substrate specificity determines the biosynthesis of branched-chain and/or straight-chain of fatty acids. This chain is Beta-ketoacyl-[acyl-carrier-protein] synthase III 1, found in Halalkalibacterium halodurans (strain ATCC BAA-125 / DSM 18197 / FERM 7344 / JCM 9153 / C-125) (Bacillus halodurans).